Reading from the N-terminus, the 106-residue chain is uncharacterized protein (106 aa).

The signal sequence occupies residues 1-27 (MHHFVPSISLFMASVSFSVFFSHLATS). Residues 42–62 (TLFSMVPLINSSFNLSVFLFF) form a helical membrane-spanning segment.

The protein localises to the membrane. This is an uncharacterized protein from Saccharomyces cerevisiae (strain ATCC 204508 / S288c) (Baker's yeast).